We begin with the raw amino-acid sequence, 321 residues long: Lipoyl synthase (321 aa).

[4Fe-4S] cluster-binding residues include cysteine 68, cysteine 73, cysteine 79, cysteine 94, cysteine 98, cysteine 101, and serine 308. Residues 80–297 enclose the Radical SAM core domain; it reads FNHGTATFMI…KVLADELGFT (218 aa).

It belongs to the radical SAM superfamily. Lipoyl synthase family. [4Fe-4S] cluster serves as cofactor.

It localises to the cytoplasm. It catalyses the reaction [[Fe-S] cluster scaffold protein carrying a second [4Fe-4S](2+) cluster] + N(6)-octanoyl-L-lysyl-[protein] + 2 oxidized [2Fe-2S]-[ferredoxin] + 2 S-adenosyl-L-methionine + 4 H(+) = [[Fe-S] cluster scaffold protein] + N(6)-[(R)-dihydrolipoyl]-L-lysyl-[protein] + 4 Fe(3+) + 2 hydrogen sulfide + 2 5'-deoxyadenosine + 2 L-methionine + 2 reduced [2Fe-2S]-[ferredoxin]. It participates in protein modification; protein lipoylation via endogenous pathway; protein N(6)-(lipoyl)lysine from octanoyl-[acyl-carrier-protein]: step 2/2. Its function is as follows. Catalyzes the radical-mediated insertion of two sulfur atoms into the C-6 and C-8 positions of the octanoyl moiety bound to the lipoyl domains of lipoate-dependent enzymes, thereby converting the octanoylated domains into lipoylated derivatives. The chain is Lipoyl synthase from Shewanella sp. (strain ANA-3).